A 171-amino-acid chain; its full sequence is MPLLDSFTVDHTRMEAPAVRVAKTMNTPHGDAITVFDLRFCVPNKEVMPERGIHTLEHLFAGFMRNHLNGNGVEIIDISPMGCRTGFYMSLIGTPDEQRVADAWKAAMEDVLKVQDQNQIPELNVYQCGTYQMHSLQEAQDIARSILEREVRINSNEELALPKEKLQELHI.

The Fe cation site is built by histidine 54, histidine 58, and cysteine 128.

This sequence belongs to the LuxS family. In terms of assembly, homodimer. Fe cation is required as a cofactor.

The catalysed reaction is S-(5-deoxy-D-ribos-5-yl)-L-homocysteine = (S)-4,5-dihydroxypentane-2,3-dione + L-homocysteine. Functionally, involved in the synthesis of autoinducer 2 (AI-2) which is secreted by bacteria and is used to communicate both the cell density and the metabolic potential of the environment. The regulation of gene expression in response to changes in cell density is called quorum sensing. Catalyzes the transformation of S-ribosylhomocysteine (RHC) to homocysteine (HC) and 4,5-dihydroxy-2,3-pentadione (DPD). This is S-ribosylhomocysteine lyase from Shigella flexneri.